Here is a 215-residue protein sequence, read N- to C-terminus: Pyridoxine/pyridoxamine 5'-phosphate oxidase (215 aa).

Substrate-binding positions include 9–12 (RRDY) and lysine 69. Residues 64-69 (RVLLLK), 79-80 (FT), lysine 86, and glutamine 108 each bind FMN. Positions 126, 130, and 134 each coordinate substrate. Residues 143–144 (QS) and tryptophan 188 each bind FMN. Substrate is bound at residue 194-196 (RLH). Arginine 198 is a binding site for FMN.

This sequence belongs to the pyridoxamine 5'-phosphate oxidase family. As to quaternary structure, homodimer. FMN is required as a cofactor.

It catalyses the reaction pyridoxamine 5'-phosphate + O2 + H2O = pyridoxal 5'-phosphate + H2O2 + NH4(+). The catalysed reaction is pyridoxine 5'-phosphate + O2 = pyridoxal 5'-phosphate + H2O2. It participates in cofactor metabolism; pyridoxal 5'-phosphate salvage; pyridoxal 5'-phosphate from pyridoxamine 5'-phosphate: step 1/1. It functions in the pathway cofactor metabolism; pyridoxal 5'-phosphate salvage; pyridoxal 5'-phosphate from pyridoxine 5'-phosphate: step 1/1. Its function is as follows. Catalyzes the oxidation of either pyridoxine 5'-phosphate (PNP) or pyridoxamine 5'-phosphate (PMP) into pyridoxal 5'-phosphate (PLP). In Pseudomonas putida (strain GB-1), this protein is Pyridoxine/pyridoxamine 5'-phosphate oxidase.